The chain runs to 245 residues: RAD51-like protein 1 (245 aa).

Interacts with brc-2 and rad-51.

The protein resides in the nucleus. Functionally, has a role in the homologous recombination repair (HRR) of genomic DNA during meiosis. Required for rad-51 recruitment onto ssDNA gaps generated at stalled replication fork barriers. This chain is RAD51-like protein 1 (rfs-1), found in Caenorhabditis elegans.